Consider the following 254-residue polypeptide: Pyrroloquinoline-quinone synthase (254 aa).

The protein belongs to the PqqC family.

The catalysed reaction is 6-(2-amino-2-carboxyethyl)-7,8-dioxo-1,2,3,4,7,8-hexahydroquinoline-2,4-dicarboxylate + 3 O2 = pyrroloquinoline quinone + 2 H2O2 + 2 H2O + H(+). It participates in cofactor biosynthesis; pyrroloquinoline quinone biosynthesis. Ring cyclization and eight-electron oxidation of 3a-(2-amino-2-carboxyethyl)-4,5-dioxo-4,5,6,7,8,9-hexahydroquinoline-7,9-dicarboxylic-acid to PQQ. This Rhodopseudomonas palustris (strain ATCC BAA-98 / CGA009) protein is Pyrroloquinoline-quinone synthase.